A 439-amino-acid chain; its full sequence is MNLTPKEIVKFLDDYVIGQKKAKKIIAIALRNRYRRMQLSPELQDDIVPKNILMIGSTGVGKTEIARRLAKMMGFPFIKIEASKYTEVGFVGRDVESMVRDLANAALNLVKNEQREKNKDKIDEFIENKILEKLLPPLPKGISDEKQEEYKNSLEKMRTKLRNGDLDESTIEIEISQNMFDTNPNLPPEMGAMQDIVKVIGVGSKKVKKEMKIKDAKNALKNEAGEKILDQESIKSEALKRAENEGIIFIDEIDKIAVSSGNSNRQDPSKEGVQRDLLPIVEGSNVQTKIGTLKTDHILFIAAGAFHLSKPSDLIPELQGRFPLRVELDSLDDKALYEILTRPKNSLLKQYSQLLKTENLELEFDDEAIKEIAKIASRANEEMQDIGARRLHTVIEKLLEDLSFEADEYAGKKFVVDKKMVEEKLGDIIENKDLARYIL.

Residues isoleucine 17, 59–64 (GVGKTE), aspartate 251, glutamate 317, and arginine 389 contribute to the ATP site.

It belongs to the ClpX chaperone family. HslU subfamily. A double ring-shaped homohexamer of HslV is capped on each side by a ring-shaped HslU homohexamer. The assembly of the HslU/HslV complex is dependent on binding of ATP.

The protein resides in the cytoplasm. ATPase subunit of a proteasome-like degradation complex; this subunit has chaperone activity. The binding of ATP and its subsequent hydrolysis by HslU are essential for unfolding of protein substrates subsequently hydrolyzed by HslV. HslU recognizes the N-terminal part of its protein substrates and unfolds these before they are guided to HslV for hydrolysis. The protein is ATP-dependent protease ATPase subunit HslU of Campylobacter jejuni subsp. jejuni serotype O:2 (strain ATCC 700819 / NCTC 11168).